A 180-amino-acid polypeptide reads, in one-letter code: Large ribosomal subunit protein uL6c (180 aa).

Belongs to the universal ribosomal protein uL6 family. As to quaternary structure, part of the 50S ribosomal subunit.

Its subcellular location is the plastid. It localises to the chloroplast. Binds 23S rRNA. This chain is Large ribosomal subunit protein uL6c (rpl6), found in Porphyra purpurea (Red seaweed).